The sequence spans 96 residues: Co-chaperonin GroES (96 aa).

This sequence belongs to the GroES chaperonin family. As to quaternary structure, heptamer of 7 subunits arranged in a ring. Interacts with the chaperonin GroEL.

The protein resides in the cytoplasm. Functionally, together with the chaperonin GroEL, plays an essential role in assisting protein folding. The GroEL-GroES system forms a nano-cage that allows encapsulation of the non-native substrate proteins and provides a physical environment optimized to promote and accelerate protein folding. GroES binds to the apical surface of the GroEL ring, thereby capping the opening of the GroEL channel. This Nitrosomonas eutropha (strain DSM 101675 / C91 / Nm57) protein is Co-chaperonin GroES.